The chain runs to 265 residues: Phosphatidylserine decarboxylase proenzyme (265 aa).

Catalysis depends on charge relay system; for autoendoproteolytic cleavage activity residues Asp-86, His-142, and Ser-226. Catalysis depends on Ser-226, which acts as the Schiff-base intermediate with substrate; via pyruvic acid; for decarboxylase activity. Ser-226 is subject to Pyruvic acid (Ser); by autocatalysis.

This sequence belongs to the phosphatidylserine decarboxylase family. PSD-B subfamily. Prokaryotic type I sub-subfamily. As to quaternary structure, heterodimer of a large membrane-associated beta subunit and a small pyruvoyl-containing alpha subunit. It depends on pyruvate as a cofactor. In terms of processing, is synthesized initially as an inactive proenzyme. Formation of the active enzyme involves a self-maturation process in which the active site pyruvoyl group is generated from an internal serine residue via an autocatalytic post-translational modification. Two non-identical subunits are generated from the proenzyme in this reaction, and the pyruvate is formed at the N-terminus of the alpha chain, which is derived from the carboxyl end of the proenzyme. The autoendoproteolytic cleavage occurs by a canonical serine protease mechanism, in which the side chain hydroxyl group of the serine supplies its oxygen atom to form the C-terminus of the beta chain, while the remainder of the serine residue undergoes an oxidative deamination to produce ammonia and the pyruvoyl prosthetic group on the alpha chain. During this reaction, the Ser that is part of the protease active site of the proenzyme becomes the pyruvoyl prosthetic group, which constitutes an essential element of the active site of the mature decarboxylase.

The protein localises to the cell membrane. The catalysed reaction is a 1,2-diacyl-sn-glycero-3-phospho-L-serine + H(+) = a 1,2-diacyl-sn-glycero-3-phosphoethanolamine + CO2. It functions in the pathway phospholipid metabolism; phosphatidylethanolamine biosynthesis; phosphatidylethanolamine from CDP-diacylglycerol: step 2/2. In terms of biological role, catalyzes the formation of phosphatidylethanolamine (PtdEtn) from phosphatidylserine (PtdSer). The polypeptide is Phosphatidylserine decarboxylase proenzyme (Anoxybacillus flavithermus (strain DSM 21510 / WK1)).